The chain runs to 496 residues: MRSSMFFAVCAAAALQTALSSPIHPRHAHQSFPNTEQWPIATVGKALKQQLPDEELQGILSQVSQDNIEATIRKLASFGTRHTLSSQTDPARGIGAARTWLTEQFQEAADASEGRMTVDWNSFVKYPGDNERIIFPVNITNIVTTLKGSEDPDRLYVTGGHYDSRNSNPIDYQGDAPGAVDVSNSCYTNWVWEDASGVAVSLELARIFAKYQPKTTIVFTAFAGEEQGLLGAENLAQTYKNNSVNVAGMINLDMVGNSKAEDGTSDPYNIRLFCQGTPLTENSTTTTSRLSIGGDNDSPARNLGRHIYEVASNAFTEMTVRLIYRLDRYSRGGDHRPFLEAGYTGVRFVQPNEDYTQQHQNVTVRNGKQYGDLVEWLDFEYNTRAAKVVASTMWSLANAPGEPMNVGINTTTSDNFSQFKWTAPKGLPVEGYEIVYRETLEPHWTSVIEVGDVNWYNLTSATIHKDNVIFGVRSVGKGGYRSPAVLPFPFGCTRNC.

The N-terminal stretch at 1–20 is a signal peptide; that stretch reads MRSSMFFAVCAAAALQTALS. The N-linked (GlcNAc...) asparagine glycan is linked to Asn138. Zn(2+)-binding residues include His161, Asp181, and Glu226. N-linked (GlcNAc...) asparagine glycosylation is present at Asn241. Position 253 (Asp253) interacts with Zn(2+). Asn282, Asn361, Asn409, Asn415, and Asn457 each carry an N-linked (GlcNAc...) asparagine glycan. The 95-residue stretch at 402 to 496 folds into the Fibronectin type-III domain; the sequence is EPMNVGINTT…PFPFGCTRNC (95 aa).

This sequence belongs to the peptidase M28 family. M28B subfamily. It depends on Zn(2+) as a cofactor.

It localises to the secreted. This Phaeosphaeria nodorum (strain SN15 / ATCC MYA-4574 / FGSC 10173) (Glume blotch fungus) protein is Probable zinc metalloprotease SNOG_06590.